Here is a 62-residue protein sequence, read N- to C-terminus: Pro-MCH variant (62 aa).

The NGE-like stretch occupies residues 23–41 (GSVAFPAENGVQDTESTQE). A disordered region spans residues 29–62 (AENGVQDTESTQEKRETGDEENSAKFPIGRRDFD). The interval 44–56 (ETGDEENSAKFPI) is NEI-like. The segment at 60–62 (DFD) is melanin-concentrating hormone-like.

The protein belongs to the melanin-concentrating hormone family.

The protein is Pro-MCH variant (PMCHL1) of Pan paniscus (Pygmy chimpanzee).